Consider the following 407-residue polypeptide: Chorismate synthase (407 aa).

Residues R43 and R49 each coordinate NADP(+). FMN contacts are provided by residues 143–145, 264–265, G308, 323–327, and R349; these read RSS, QA, and KPIST.

This sequence belongs to the chorismate synthase family. Homotetramer. FMNH2 is required as a cofactor.

The enzyme catalyses 5-O-(1-carboxyvinyl)-3-phosphoshikimate = chorismate + phosphate. The protein operates within metabolic intermediate biosynthesis; chorismate biosynthesis; chorismate from D-erythrose 4-phosphate and phosphoenolpyruvate: step 7/7. In terms of biological role, catalyzes the anti-1,4-elimination of the C-3 phosphate and the C-6 proR hydrogen from 5-enolpyruvylshikimate-3-phosphate (EPSP) to yield chorismate, which is the branch point compound that serves as the starting substrate for the three terminal pathways of aromatic amino acid biosynthesis. This reaction introduces a second double bond into the aromatic ring system. The protein is Chorismate synthase of Corynebacterium efficiens (strain DSM 44549 / YS-314 / AJ 12310 / JCM 11189 / NBRC 100395).